A 322-amino-acid polypeptide reads, in one-letter code: CMP-sialic acid transporter 1 (322 aa).

The Cytoplasmic segment spans residues 1 to 2 (MQ). A helical membrane pass occupies residues 3-23 (WYLVAALLTVLTSSQGILTTL). Residues 24–33 (SQSNGKYKYD) lie on the Lumenal side of the membrane. A helical transmembrane segment spans residues 34–54 (YATIPFLAELFKLSFSSFFLW). Residues 55 to 75 (KECQSSSPPRMTKEWRSIRLY) are Cytoplasmic-facing. A helical transmembrane segment spans residues 76–96 (LVPSVIYLIHNNVQFATLTYV). Residues 97–100 (DPST) lie on the Lumenal side of the membrane. A helical membrane pass occupies residues 101-120 (YQIMGNLKIVTTGILFRLVL). The Cytoplasmic segment spans residues 121 to 126 (KRKLSN). A helical transmembrane segment spans residues 127-144 (LQWMAVVLLAVGTTTSQV). At 145–157 (KGCGDAPCDSLFS) the chain is on the lumenal side. The chain crosses the membrane as a helical span at residues 158–178 (APFQGYMLGILSACLSALAGV). Over 179 to 198 (YTEYLMKKNNDSLYWQNVQL) the chain is Cytoplasmic. Residues 199-219 (YTFGVIFNMGWLIYGDFKAGF) form a helical membrane-spanning segment. At 220 to 233 (ERGPWWQRLFNGYS) the chain is on the lumenal side. Residues 234-254 (ITTWMVVFNLGSTGLLVSWLM) traverse the membrane as a helical segment. Residues 255–262 (KYSDNIVK) are Cytoplasmic-facing. The helical transmembrane segment at 263 to 283 (VYSTSMGMLLTMVLSVYLFNV) threads the bilayer. The Lumenal segment spans residues 284–286 (RAT).

It belongs to the nucleotide-sugar transporter family. CMP-Sialate:CMP antiporter (TC 2.A.7.12) subfamily.

It is found in the golgi apparatus membrane. Sugar transporter involved in the transport of CMP-sialic acid from the cytoplasm into the Golgi. May transport important nucleotide sugars such as CMP-Kdo (2-keto-3-deoxy-D-manno-octulosonic acid) in physiological conditions. The chain is CMP-sialic acid transporter 1 from Oryza sativa subsp. indica (Rice).